The chain runs to 243 residues: Pyridoxine 5'-phosphate synthase (243 aa).

A 3-amino-2-oxopropyl phosphate-binding site is contributed by Asn9. 1-deoxy-D-xylulose 5-phosphate is bound at residue 11–12 (DH). Arg20 is a 3-amino-2-oxopropyl phosphate binding site. The Proton acceptor role is filled by His45. Residues Arg47 and His52 each contribute to the 1-deoxy-D-xylulose 5-phosphate site. Catalysis depends on Glu72, which acts as the Proton acceptor. Thr102 lines the 1-deoxy-D-xylulose 5-phosphate pocket. His193 serves as the catalytic Proton donor. 3-amino-2-oxopropyl phosphate contacts are provided by residues Gly194 and 215-216 (GH).

It belongs to the PNP synthase family. Homooctamer; tetramer of dimers.

It localises to the cytoplasm. The enzyme catalyses 3-amino-2-oxopropyl phosphate + 1-deoxy-D-xylulose 5-phosphate = pyridoxine 5'-phosphate + phosphate + 2 H2O + H(+). It participates in cofactor biosynthesis; pyridoxine 5'-phosphate biosynthesis; pyridoxine 5'-phosphate from D-erythrose 4-phosphate: step 5/5. In terms of biological role, catalyzes the complicated ring closure reaction between the two acyclic compounds 1-deoxy-D-xylulose-5-phosphate (DXP) and 3-amino-2-oxopropyl phosphate (1-amino-acetone-3-phosphate or AAP) to form pyridoxine 5'-phosphate (PNP) and inorganic phosphate. In Photorhabdus laumondii subsp. laumondii (strain DSM 15139 / CIP 105565 / TT01) (Photorhabdus luminescens subsp. laumondii), this protein is Pyridoxine 5'-phosphate synthase.